The chain runs to 590 residues: Phosphatidylserine decarboxylase proenzyme 1, mitochondrial (590 aa).

Residues 1 to 59 (MPLKPISFRWSKTSVRSVPNPFMYGPDNLNKPLSRASQMAERVHQQTPSSTNYQQRRYF) constitute a mitochondrion transit peptide. Over 60–140 (SYYYYQFPKI…GKERRRFIRW (81 aa)) the chain is Mitochondrial matrix. Residues 141–159 (WTVTSLTIVLGGVYAKIKY) form a helical membrane-spanning segment. Topologically, residues 160–590 (ERGDHEENPY…KVGQSLGGFV (431 aa)) are mitochondrial intermembrane. Residues aspartate 260, histidine 403, and serine 558 each act as charge relay system; for autoendoproteolytic cleavage activity in the active site. Catalysis depends on serine 558, which acts as the Schiff-base intermediate with substrate; via pyruvic acid; for decarboxylase activity. At serine 558 the chain carries Pyruvic acid (Ser); by autocatalysis.

Belongs to the phosphatidylserine decarboxylase family. PSD-B subfamily. Eukaryotic type I sub-subfamily. Heterodimer of a large membrane-associated beta subunit and a small pyruvoyl-containing alpha subunit. Pyruvate is required as a cofactor. Post-translationally, is synthesized initially as an inactive proenzyme. Formation of the active enzyme involves a self-maturation process in which the active site pyruvoyl group is generated from an internal serine residue via an autocatalytic post-translational modification. Two non-identical subunits are generated from the proenzyme in this reaction, and the pyruvate is formed at the N-terminus of the alpha chain, which is derived from the carboxyl end of the proenzyme. The autoendoproteolytic cleavage occurs by a canonical serine protease mechanism, in which the side chain hydroxyl group of the serine supplies its oxygen atom to form the C-terminus of the beta chain, while the remainder of the serine residue undergoes an oxidative deamination to produce ammonia and the pyruvoyl prosthetic group on the alpha chain. During this reaction, the Ser that is part of the protease active site of the proenzyme becomes the pyruvoyl prosthetic group, which constitutes an essential element of the active site of the mature decarboxylase.

It is found in the mitochondrion inner membrane. It catalyses the reaction a 1,2-diacyl-sn-glycero-3-phospho-L-serine + H(+) = a 1,2-diacyl-sn-glycero-3-phosphoethanolamine + CO2. It participates in phospholipid metabolism; phosphatidylethanolamine biosynthesis; phosphatidylethanolamine from CDP-diacylglycerol: step 2/2. Functionally, catalyzes the formation of phosphatidylethanolamine (PtdEtn) from phosphatidylserine (PtdSer). Plays a central role in phospholipid metabolism and in the interorganelle trafficking of phosphatidylserine. Important for virulence. In Candida albicans (strain SC5314 / ATCC MYA-2876) (Yeast), this protein is Phosphatidylserine decarboxylase proenzyme 1, mitochondrial.